The chain runs to 397 residues: MIIKPRVRGFICVTTHPAGCAASVREQIAYVAGRGPIERGPKKVLVIGASTGYGLAARIAAAFGAGAATLGVFFERAPLDAKPGTAGWYNSAAFHDEAAALGLYAASINGDAFSDEIKQKTIDAIKRDLGQVDLVVYSVAAPRRTHPKTGITHQSTLKPIGQAVRLRGIDTDNEAIKETLLQPATPDEIAGTVAVMGGEDWRMWIDALDAAGVLADGAKTTAFTYLGEKVTHDIYWNGSIGEAKKDLDRTVLALRDKLAARGGDARVSVLKAVVTQASSAIPMMPLYLSLLFKVMKARGTHEGCIEQVDGLFRDSLYGAPPHVDAEGRLRADRLELDPAVQAQVLELWDRVTDDNLYALTDFAGYKTEFLRLFGFEIDGVDYDAHVDPNIRIPNLIE.

Residues 48 to 53 (GASTGY), 74 to 75 (FE), 111 to 112 (DA), and 139 to 140 (VA) each bind NAD(+). Position 225 (Tyr225) interacts with substrate. Tyr235 serves as the catalytic Proton donor. NAD(+) contacts are provided by residues Lys244 and 273–275 (VVT).

This sequence belongs to the TER reductase family. In terms of assembly, monomer.

It catalyses the reaction a 2,3-saturated acyl-[ACP] + NAD(+) = a (2E)-enoyl-[ACP] + NADH + H(+). The protein operates within lipid metabolism; fatty acid biosynthesis. Involved in the final reduction of the elongation cycle of fatty acid synthesis (FAS II). Catalyzes the reduction of a carbon-carbon double bond in an enoyl moiety that is covalently linked to an acyl carrier protein (ACP). The polypeptide is Enoyl-[acyl-carrier-protein] reductase [NADH] (Burkholderia thailandensis (strain ATCC 700388 / DSM 13276 / CCUG 48851 / CIP 106301 / E264)).